The following is a 547-amino-acid chain: Chaperonin GroEL (547 aa).

Residues 30-33 (TLGP), Lys51, 87-91 (DGTTT), Gly415, 479-481 (NAA), and Asp495 contribute to the ATP site.

It belongs to the chaperonin (HSP60) family. In terms of assembly, forms a cylinder of 14 subunits composed of two heptameric rings stacked back-to-back. Interacts with the co-chaperonin GroES.

Its subcellular location is the cytoplasm. The catalysed reaction is ATP + H2O + a folded polypeptide = ADP + phosphate + an unfolded polypeptide.. Functionally, together with its co-chaperonin GroES, plays an essential role in assisting protein folding. The GroEL-GroES system forms a nano-cage that allows encapsulation of the non-native substrate proteins and provides a physical environment optimized to promote and accelerate protein folding. This chain is Chaperonin GroEL, found in Pseudomonas fluorescens (strain ATCC BAA-477 / NRRL B-23932 / Pf-5).